We begin with the raw amino-acid sequence, 132 residues long: Small ribosomal subunit protein uS11 (132 aa).

It belongs to the universal ribosomal protein uS11 family. As to quaternary structure, part of the 30S ribosomal subunit. Interacts with proteins S7 and S18. Binds to IF-3.

Located on the platform of the 30S subunit, it bridges several disparate RNA helices of the 16S rRNA. Forms part of the Shine-Dalgarno cleft in the 70S ribosome. This is Small ribosomal subunit protein uS11 from Clostridium kluyveri (strain NBRC 12016).